Reading from the N-terminus, the 455-residue chain is Probable carboxypeptidase MCYG_07204 (455 aa).

An N-terminal signal peptide occupies residues 1–21 (MQKTYLLALLVSSLASVRSLA). Asn93 is a glycosylation site (N-linked (GlcNAc...) asparagine). Asp170 contacts Zn(2+). Glu202 (proton acceptor) is an active-site residue. Residue Glu203 coordinates Zn(2+). Residue Asn390 is glycosylated (N-linked (GlcNAc...) asparagine).

Belongs to the peptidase M20A family. The cofactor is Zn(2+).

It localises to the secreted. The protein is Probable carboxypeptidase MCYG_07204 of Arthroderma otae (strain ATCC MYA-4605 / CBS 113480) (Microsporum canis).